Consider the following 238-residue polypeptide: Ribonuclease PH (238 aa).

Phosphate-binding positions include R86 and 124 to 126; that span reads GTR.

Belongs to the RNase PH family. Homohexameric ring arranged as a trimer of dimers.

It catalyses the reaction tRNA(n+1) + phosphate = tRNA(n) + a ribonucleoside 5'-diphosphate. Phosphorolytic 3'-5' exoribonuclease that plays an important role in tRNA 3'-end maturation. Removes nucleotide residues following the 3'-CCA terminus of tRNAs; can also add nucleotides to the ends of RNA molecules by using nucleoside diphosphates as substrates, but this may not be physiologically important. Probably plays a role in initiation of 16S rRNA degradation (leading to ribosome degradation) during starvation. The protein is Ribonuclease PH of Pasteurella multocida (strain Pm70).